Reading from the N-terminus, the 624-residue chain is tRNA uridine 5-carboxymethylaminomethyl modification enzyme MnmG (624 aa).

Residues 13–18, Val125, and Ser180 each bind FAD; that span reads GGGHAG. Position 273-287 (273-287) interacts with NAD(+); the sequence is GPRYCPSIEDKIVRF. Gln370 is an FAD binding site.

This sequence belongs to the MnmG family. As to quaternary structure, homodimer. Heterotetramer of two MnmE and two MnmG subunits. FAD is required as a cofactor.

The protein localises to the cytoplasm. In terms of biological role, NAD-binding protein involved in the addition of a carboxymethylaminomethyl (cmnm) group at the wobble position (U34) of certain tRNAs, forming tRNA-cmnm(5)s(2)U34. This Legionella pneumophila (strain Lens) protein is tRNA uridine 5-carboxymethylaminomethyl modification enzyme MnmG.